The primary structure comprises 340 residues: Heat-inducible transcription repressor HrcA (340 aa).

The protein belongs to the HrcA family.

In terms of biological role, negative regulator of class I heat shock genes (grpE-dnaK-dnaJ and groELS operons). Prevents heat-shock induction of these operons. The protein is Heat-inducible transcription repressor HrcA of Burkholderia vietnamiensis (strain G4 / LMG 22486) (Burkholderia cepacia (strain R1808)).